A 269-amino-acid polypeptide reads, in one-letter code: Phosphonoacetaldehyde hydrolase (269 aa).

Residue Asp10 is the Nucleophile of the active site. The Mg(2+) site is built by Asp10 and Ala12. Lys52 acts as the Schiff-base intermediate with substrate in catalysis. Residue Asp186 coordinates Mg(2+).

This sequence belongs to the HAD-like hydrolase superfamily. PhnX family. Homodimer. Requires Mg(2+) as cofactor.

It catalyses the reaction phosphonoacetaldehyde + H2O = acetaldehyde + phosphate + H(+). Functionally, involved in phosphonate degradation. In Salmonella agona (strain SL483), this protein is Phosphonoacetaldehyde hydrolase.